The sequence spans 1449 residues: DNA polymerase III PolC-type (1449 aa).

A disordered region spans residues 194-231 (AQEKPVKKESSDNKHKSNGGNKGGYEKKSYKDEPKNEN). Basic and acidic residues-rich tracts occupy residues 197-208 (KPVKKESSDNKH) and 217-229 (GYEK…EPKN). One can recognise an Exonuclease domain in the interval 435–590 (YVVFDIETTG…DDAKATAEIL (156 aa)).

Belongs to the DNA polymerase type-C family. PolC subfamily.

Its subcellular location is the cytoplasm. It catalyses the reaction DNA(n) + a 2'-deoxyribonucleoside 5'-triphosphate = DNA(n+1) + diphosphate. In terms of biological role, required for replicative DNA synthesis. This DNA polymerase also exhibits 3' to 5' exonuclease activity. The sequence is that of DNA polymerase III PolC-type from Clostridium perfringens (strain 13 / Type A).